The primary structure comprises 461 residues: Zinc finger protein ZFP2 (461 aa).

13 C2H2-type zinc fingers span residues 102–124, 130–152, 158–180, 186–208, 214–236, 242–264, 270–292, 298–320, 326–348, 354–376, 382–404, 410–432, and 438–460; these read YECN…QRIH, YKCN…QRIH, YKCN…QRTH, YQCK…ERIH, YECN…QRSH, YECS…QRNH, YKCN…QRLH, FECN…RRIH, YECM…QVIH, YECD…QRTH, and YQCN…QRTH.

This sequence belongs to the krueppel C2H2-type zinc-finger protein family.

The protein localises to the nucleus. Probable transcription factor involved in neuronal differentiation and/or phenotypic maintenance. This chain is Zinc finger protein ZFP2 (ZFP2), found in Homo sapiens (Human).